We begin with the raw amino-acid sequence, 445 residues long: MKHFEANFDGLVGPTHNYAGLSFGNVASFSNASAVSDPKSAAKQGLKKAKALADMGMVQGMLAPQERPDLHTLRRIGFSGTDAEILNKAAKEAPALLRACCSASSMWTANAATVSPSADTQDGKLHFTPANLVDKLHRSIEPVTTGNILAATFNNSRHFSHHQHLPEHSSFGDEGAANHTRLCENYGNAGVELFVYGQEATNPNAPKPQKYPARQTLEASQAIARLHGLSEENTVYLSQNPDVIDQGVFHNDVIAVGNQNVLFYHQQAFLDTQNKFDEIQQKFGDSKVHFIEVPTAKVSIEDAVKSYLFNTQIITLPSGEMAIIAPTNCQENPAVFAYLNELVTLGTPIKQVNYFDVKQSMQNGGGPACLRLRVAMNDMELAAVNQNTLMNDALFTRLNAWVDKHYRDRLSVDDLADPQLIIESRTALDELTQIMKLGSVYQFQK.

Residues 19–28 (AGLSFGNVAS), Asn110, and 137–138 (HR) each bind substrate. The active site involves Glu174. Substrate is bound at residue Arg214. Residue His250 is part of the active site. Residues Asp252 and Asn363 each contribute to the substrate site. Residue Cys369 is the Nucleophile of the active site.

It belongs to the succinylarginine dihydrolase family. Homodimer.

It catalyses the reaction N(2)-succinyl-L-arginine + 2 H2O + 2 H(+) = N(2)-succinyl-L-ornithine + 2 NH4(+) + CO2. The protein operates within amino-acid degradation; L-arginine degradation via AST pathway; L-glutamate and succinate from L-arginine: step 2/5. Catalyzes the hydrolysis of N(2)-succinylarginine into N(2)-succinylornithine, ammonia and CO(2). In Shewanella woodyi (strain ATCC 51908 / MS32), this protein is N-succinylarginine dihydrolase.